The chain runs to 120 residues: NAD(P)H-quinone oxidoreductase subunit 3, chloroplastic (120 aa).

Transmembrane regions (helical) follow at residues 9 to 29 (IFWA…LISG), 64 to 84 (MFAL…PWAM), and 88 to 108 (VLGV…ILGL).

The protein belongs to the complex I subunit 3 family. In terms of assembly, NDH is composed of at least 16 different subunits, 5 of which are encoded in the nucleus.

Its subcellular location is the plastid. The protein resides in the chloroplast thylakoid membrane. It catalyses the reaction a plastoquinone + NADH + (n+1) H(+)(in) = a plastoquinol + NAD(+) + n H(+)(out). It carries out the reaction a plastoquinone + NADPH + (n+1) H(+)(in) = a plastoquinol + NADP(+) + n H(+)(out). NDH shuttles electrons from NAD(P)H:plastoquinone, via FMN and iron-sulfur (Fe-S) centers, to quinones in the photosynthetic chain and possibly in a chloroplast respiratory chain. The immediate electron acceptor for the enzyme in this species is believed to be plastoquinone. Couples the redox reaction to proton translocation, and thus conserves the redox energy in a proton gradient. The polypeptide is NAD(P)H-quinone oxidoreductase subunit 3, chloroplastic (Lobularia maritima (Sweet alyssum)).